The following is a 482-amino-acid chain: Anaerobic nitric oxide reductase flavorubredoxin (482 aa).

Positions 30-210 (LRGSSYNSYL…PFSRLVTPKI (181 aa)) are zinc metallo-hydrolase. Residues histidine 79, glutamate 81, aspartate 83, histidine 147, aspartate 166, and histidine 227 each coordinate Fe cation. The region spanning 254-393 (ITIFYDTMSN…LCRQHGRDIA (140 aa)) is the Flavodoxin-like domain. FMN-binding positions include 260-264 (TMSNN) and 342-369 (AFGS…EMSL). Positions 426-477 (GPSMQCSVCQWIYDPAKGEPLQDVAPGTPWSDVPDNFLCPECSLGKDVFDVL) constitute a Rubredoxin-like domain. Residues cysteine 431, cysteine 434, cysteine 464, and cysteine 467 each contribute to the Fe cation site.

In the N-terminal section; belongs to the zinc metallo-hydrolase group 3 family. Homotetramer. Requires Fe cation as cofactor. It depends on FMN as a cofactor.

It localises to the cytoplasm. The protein operates within nitrogen metabolism; nitric oxide reduction. In terms of biological role, anaerobic nitric oxide reductase; uses NADH to detoxify nitric oxide (NO), protecting several 4Fe-4S NO-sensitive enzymes. Has at least 2 reductase partners, only one of which (NorW, flavorubredoxin reductase) has been identified. NO probably binds to the di-iron center; electrons enter from the NorW at rubredoxin and are transferred sequentially to the FMN center and the di-iron center. Also able to function as an aerobic oxygen reductase. This Citrobacter koseri (strain ATCC BAA-895 / CDC 4225-83 / SGSC4696) protein is Anaerobic nitric oxide reductase flavorubredoxin.